The sequence spans 70 residues: Small ribosomal subunit protein bS21 (70 aa).

Belongs to the bacterial ribosomal protein bS21 family.

The polypeptide is Small ribosomal subunit protein bS21 (Campylobacter fetus subsp. fetus (strain 82-40)).